A 322-amino-acid polypeptide reads, in one-letter code: Tetraacyldisaccharide 4'-kinase (322 aa).

54–61 is an ATP binding site; sequence SVGGTGKT.

Belongs to the LpxK family.

The catalysed reaction is a lipid A disaccharide + ATP = a lipid IVA + ADP + H(+). Its pathway is glycolipid biosynthesis; lipid IV(A) biosynthesis; lipid IV(A) from (3R)-3-hydroxytetradecanoyl-[acyl-carrier-protein] and UDP-N-acetyl-alpha-D-glucosamine: step 6/6. Transfers the gamma-phosphate of ATP to the 4'-position of a tetraacyldisaccharide 1-phosphate intermediate (termed DS-1-P) to form tetraacyldisaccharide 1,4'-bis-phosphate (lipid IVA). This is Tetraacyldisaccharide 4'-kinase from Francisella tularensis subsp. holarctica (strain FTNF002-00 / FTA).